The sequence spans 425 residues: Synaptotagmin-4 (425 aa).

The Vesicular segment spans residues 1–16 (MAPITTSRVEFDEIPT). A helical transmembrane segment spans residues 17 to 37 (VVGIFSAFGLVFTVSLFAWIC). The Cytoplasmic segment spans residues 38 to 425 (CQRRSAKSNK…IAKWHMLCDG (388 aa)). A disordered region spans residues 127–147 (TETEKEANSPESLKSSTSLTS). At Ser-135 the chain carries Phosphoserine; by MAPK8. Positions 137–146 (ESLKSSTSLT) are enriched in low complexity. C2 domains lie at 153–274 (KLGT…MLMT) and 287–420 (GRGE…AKWH). 3 residues coordinate Ca(2+): Asp-246, Ser-249, and Asp-252.

Belongs to the synaptotagmin family. Interacts with KIF1A; the interaction increases in presence of calcium and decreases when SYT4 is phosphorylated at Ser-135. It depends on Ca(2+) as a cofactor. Post-translationally, phosphorylation at Ser-135 by MAPK8/JNK1 reduces interaction with KIF1A and neuronal dense core vesicles mobility. As to expression, expressed in many regions of the nervous system but is undetectable in extra neural tissues.

Its subcellular location is the cytoplasmic vesicle. It localises to the secretory vesicle. The protein localises to the neuronal dense core vesicle membrane. In terms of biological role, synaptotagmin family member which does not bind Ca(2+). Plays a role in dendrite formation by melanocytes. Functionally, synaptotagmin family member which does not bind Ca(2+). Involved in neuronal dense core vesicles (DCVs) mobility through its interaction with KIF1A. Upon increased neuronal activity, phosphorylation by MAPK8/JNK1 destabilizes the interaction with KIF1A and captures DCVs to synapses. Plays a role in dendrite formation by melanocytes. The polypeptide is Synaptotagmin-4 (Syt4) (Mus musculus (Mouse)).